The primary structure comprises 308 residues: Ribonuclease Z (308 aa).

Residues H62, H64, D66, H67, H140, D211, and H269 each contribute to the Zn(2+) site. Residue D66 is the Proton acceptor of the active site.

Belongs to the RNase Z family. Homodimer. Requires Zn(2+) as cofactor.

The catalysed reaction is Endonucleolytic cleavage of RNA, removing extra 3' nucleotides from tRNA precursor, generating 3' termini of tRNAs. A 3'-hydroxy group is left at the tRNA terminus and a 5'-phosphoryl group is left at the trailer molecule.. Zinc phosphodiesterase, which displays some tRNA 3'-processing endonuclease activity. Probably involved in tRNA maturation, by removing a 3'-trailer from precursor tRNA. The polypeptide is Ribonuclease Z (Treponema denticola (strain ATCC 35405 / DSM 14222 / CIP 103919 / JCM 8153 / KCTC 15104)).